The sequence spans 65 residues: Large ribosomal subunit protein bL35 (65 aa).

The protein belongs to the bacterial ribosomal protein bL35 family.

The protein is Large ribosomal subunit protein bL35 of Sorangium cellulosum (strain So ce56) (Polyangium cellulosum (strain So ce56)).